We begin with the raw amino-acid sequence, 615 residues long: Peptidoglycan-binding protein YepA (615 aa).

A signal peptide spans 1–26 (MRNLAALLPALFLLGSSLLPAGTALA).

It belongs to the bacterial solute-binding protein 5 family. In terms of assembly, the complex is composed of one ATP-binding protein (YejF), two transmembrane proteins (YejB and YejE) and a solute-binding protein (YepA).

Its subcellular location is the periplasm. Its function is as follows. Part of the ABC transporter complex YejBEF-YepA involved in the uptake of muropeptides, the breakdown products of cell wall peptidoglycan. The import of muropeptides into the cell enables peptidoglycan recycling, which is vital for cell wall integrity in this bacterium. Probably binds muropeptides. The sequence is that of Peptidoglycan-binding protein YepA from Agrobacterium fabrum (strain C58 / ATCC 33970) (Agrobacterium tumefaciens (strain C58)).